The sequence spans 71 residues: NAD(P)H-quinone oxidoreductase subunit O (71 aa).

This sequence belongs to the complex I NdhO subunit family. NDH-1 can be composed of about 15 different subunits; different subcomplexes with different compositions have been identified which probably have different functions.

It is found in the cellular thylakoid membrane. It catalyses the reaction a plastoquinone + NADH + (n+1) H(+)(in) = a plastoquinol + NAD(+) + n H(+)(out). The catalysed reaction is a plastoquinone + NADPH + (n+1) H(+)(in) = a plastoquinol + NADP(+) + n H(+)(out). In terms of biological role, NDH-1 shuttles electrons from an unknown electron donor, via FMN and iron-sulfur (Fe-S) centers, to quinones in the respiratory and/or the photosynthetic chain. The immediate electron acceptor for the enzyme in this species is believed to be plastoquinone. Couples the redox reaction to proton translocation, and thus conserves the redox energy in a proton gradient. Cyanobacterial NDH-1 also plays a role in inorganic carbon-concentration. In Microcystis aeruginosa (strain NIES-843 / IAM M-2473), this protein is NAD(P)H-quinone oxidoreductase subunit O.